Here is a 155-residue protein sequence, read N- to C-terminus: Small ribosomal subunit protein uS7c (155 aa).

This sequence belongs to the universal ribosomal protein uS7 family. In terms of assembly, part of the 30S ribosomal subunit.

The protein localises to the plastid. It localises to the chloroplast. Functionally, one of the primary rRNA binding proteins, it binds directly to 16S rRNA where it nucleates assembly of the head domain of the 30S subunit. The polypeptide is Small ribosomal subunit protein uS7c (rps7) (Saruma henryi (Upright wild ginger)).